A 788-amino-acid polypeptide reads, in one-letter code: Phenylalanine--tRNA ligase beta subunit (788 aa).

Positions 39-147 (FNVSGEIITA…DPVELGVNVV (109 aa)) constitute a tRNA-binding domain. In terms of domain architecture, B5 spans 399-472 (IEPKKVMLRK…RIYGYEKVES (74 aa)). Mg(2+) contacts are provided by Asp450, Asp456, Glu459, and Glu460. The region spanning 694-787 (PRFPAVRRDI…AEREFGIRRR (94 aa)) is the FDX-ACB domain.

It belongs to the phenylalanyl-tRNA synthetase beta subunit family. Type 1 subfamily. As to quaternary structure, tetramer of two alpha and two beta subunits. Requires Mg(2+) as cofactor.

The protein localises to the cytoplasm. The enzyme catalyses tRNA(Phe) + L-phenylalanine + ATP = L-phenylalanyl-tRNA(Phe) + AMP + diphosphate + H(+). In Thermotoga maritima (strain ATCC 43589 / DSM 3109 / JCM 10099 / NBRC 100826 / MSB8), this protein is Phenylalanine--tRNA ligase beta subunit (pheT).